The sequence spans 307 residues: Cyclin-dependent kinase 5 activator 1 (307 aa).

A lipid anchor (N-myristoyl glycine) is attached at Gly2. Phosphoserine; by CDK5 is present on Ser8. The disordered stretch occupies residues 97–135; that stretch reads TFAQPPPAQPPAPPASQLSGSQTGVSSSVKKAPHPAVSS. Pro residues predominate over residues 100 to 110; it reads QPPPAQPPAPP. Positions 112–125 are enriched in polar residues; the sequence is SQLSGSQTGVSSSV. Thr138 is modified (phosphothreonine; by CDK5).

It belongs to the cyclin-dependent kinase 5 activator family. Heterodimer composed of a catalytic subunit CDK5 and a regulatory subunit CDK5R1 (p25) and macromolecular complex composed of at least CDK5, CDK5R1 (p35) and CDK5RAP1 or CDK5RAP2 or CDK5RAP3. Only the heterodimer shows kinase activity. Interacts with EPHA4 and NGEF; may mediate the activation of NGEF by EPHA4. Interacts with RASGRF2. The complex p35/CDK5 interacts with CLOCK. The p35 form is proteolytically cleaved by calpain, giving rise to the p25 form. P35 has a 5 to 10 fold shorter half-life compared to p25. The conversion results in deregulation of the CDK5 kinase: p25/CDK5 kinase displays an increased and altered tau phosphorylation in comparison to the p35/CDK5 kinase in vivo. Post-translationally, myristoylated. A proper myristoylation signal is essential for the proper distribution of p35. In terms of processing, phosphorylation at Ser-8 and Thr-138 by CDK5 prevents calpain-mediated proteolysis. Ubiquitinated, leading to its degradation: degradation of p35 by proteasome results in down-regulation of CDK5 activity. During this process, CDK5 phosphorylates p35 and induces its ubiquitination and subsequent degradation. Ubiquitinated by the CRL2(FEM1B) complex, which recognizes the -Gly-Leu-Asp-Arg C-degron at the C-terminus, leading to its degradation. As to expression, brain and neuron specific.

The protein resides in the cell membrane. Its subcellular location is the cell projection. It is found in the neuron projection. The protein localises to the nucleus. It localises to the cytoplasm. The protein resides in the perinuclear region. Its subcellular location is the perikaryon. Its function is as follows. p35 is a neuron specific activator of CDK5. The complex p35/CDK5 is required for neurite outgrowth and cortical lamination. Involved in dendritic spine morphogenesis by mediating the EFNA1-EPHA4 signaling. Activator of TPKII. The complex p35/CDK5 participates in the regulation of the circadian clock by modulating the function of CLOCK protein: phosphorylates CLOCK at 'Thr-451' and 'Thr-461' and regulates the transcriptional activity of the CLOCK-BMAL1 heterodimer in association with altered stability and subcellular distribution. In Bos taurus (Bovine), this protein is Cyclin-dependent kinase 5 activator 1 (CDK5R1).